Here is a 103-residue protein sequence, read N- to C-terminus: Protamine-3 (103 aa).

Residues 1-103 (MGSRCAKLNT…QSPEPKRTPS (103 aa)) are disordered. Residues 10 to 21 (TGQSPGHSPGHS) are compositionally biased toward low complexity. Positions 50-66 (GEEEEEEEEEGEEEEKE) are enriched in acidic residues. Basic and acidic residues predominate over residues 78–90 (EPERQEEGHKDNA). Ser95 carries the post-translational modification Phosphoserine.

The protein belongs to the protamine P3 family.

Its subcellular location is the nucleus. The protein localises to the chromosome. Functionally, protamines substitute for histones in the chromatin of sperm during the haploid phase of spermatogenesis. They compact sperm DNA into a highly condensed, stable and inactive complex. The protein is Protamine-3 (PRM3) of Homo sapiens (Human).